A 367-amino-acid chain; its full sequence is Germination protease (367 aa).

Positions 1 to 15 (MKEPLDLSKYSVRTD) are excised as a propeptide.

This sequence belongs to the peptidase A25 family. Homotetramer. Post-translationally, autoproteolytically processed. The inactive tetrameric zymogen termed p46 autoprocesses to a smaller form termed p41, which is active only during spore germination.

It carries out the reaction Endopeptidase action with P4 Glu or Asp, P1 preferably Glu &gt; Asp, P1' hydrophobic and P2' Ala.. Initiates the rapid degradation of small, acid-soluble proteins during spore germination. The sequence is that of Germination protease from Bacillus cereus (strain G9842).